The primary structure comprises 415 residues: Phosphopentomutase (415 aa).

6 residues coordinate Mn(2+): D10, D313, H318, D354, H355, and H366.

The protein belongs to the phosphopentomutase family. Requires Mn(2+) as cofactor.

It is found in the cytoplasm. The catalysed reaction is 2-deoxy-alpha-D-ribose 1-phosphate = 2-deoxy-D-ribose 5-phosphate. It carries out the reaction alpha-D-ribose 1-phosphate = D-ribose 5-phosphate. Its pathway is carbohydrate degradation; 2-deoxy-D-ribose 1-phosphate degradation; D-glyceraldehyde 3-phosphate and acetaldehyde from 2-deoxy-alpha-D-ribose 1-phosphate: step 1/2. Its function is as follows. Isomerase that catalyzes the conversion of deoxy-ribose 1-phosphate (dRib-1-P) and ribose 1-phosphate (Rib-1-P) to deoxy-ribose 5-phosphate (dRib-5-P) and ribose 5-phosphate (Rib-5-P), respectively. The protein is Phosphopentomutase of Psychromonas ingrahamii (strain DSM 17664 / CCUG 51855 / 37).